A 115-amino-acid chain; its full sequence is MSKVMIIMLVGMIFAIISTVSGGAGCSSMGASCQIGSATCCGVCNVHTLRCEARIGPPINTQPTRRTQPTRRTRGPKVTRSSRPTNRTRRPKPTNRSRRPKPTHRRKPTNRPRSH.

A signal peptide spans 1-22 (MSKVMIIMLVGMIFAIISTVSG). 3 cysteine pairs are disulfide-bonded: cysteine 26–cysteine 41, cysteine 33–cysteine 44, and cysteine 40–cysteine 51. A disordered region spans residues 54–115 (RIGPPINTQP…RKPTNRPRSH (62 aa)). Composition is skewed to basic residues over residues 68 to 77 (QPTRRTRGPK) and 86 to 115 (NRTR…PRSH).

Expressed by the venom gland.

The protein localises to the secreted. The protein is Cysteine-rich venom protein 5 of Pimpla hypochondriaca (Parasitoid wasp).